A 721-amino-acid polypeptide reads, in one-letter code: mRNA (2'-O-methyladenosine-N(6)-)-methyltransferase (721 aa).

Composition is skewed to polar residues over residues 1–10 (MTSENHTTIK) and 19–36 (PTGS…TSKP). Positions 1–37 (MTSENHTTIKADSALVMSPTGSTSQAAPFSPSTSKPI) are disordered. Residues 43-77 (ELIQAGWSKCWSKRENRPYYFNRFTNQSLWEMPVL) form the WW domain. Residues 93 to 170 (PASGEANADA…KQGQASTPAP (78 aa)) form a disordered region. Positions 132 to 148 (IPATPTTPTVPISPSTP) are enriched in low complexity. The substrate site is built by R239 and R269. Residue 558 to 561 (NPPF) participates in S-adenosyl-L-methionine binding. Substrate-binding positions include E563 and 593 to 597 (WRDPP). An S-adenosyl-L-methionine-binding site is contributed by 619–621 (FEH). Positions 675-686 (SGRSLPSPGPSS) are enriched in low complexity. Positions 675–721 (SGRSLPSPGPSSTNTGEKDSKPAPERTAPSQDNSSPVDKTAQDTTNT) are disordered. The span at 702–721 (APSQDNSSPVDKTAQDTTNT) shows a compositional bias: polar residues.

This sequence belongs to the CAPAM family.

Its subcellular location is the nucleus. It carries out the reaction a 5'-end (N(7)-methyl 5'-triphosphoguanosine)-(2'-O-methyladenosine) in mRNA + S-adenosyl-L-methionine = a 5'-end (N(7)-methyl 5'-triphosphoguanosine)-(N(6),2'-O-dimethyladenosine) in mRNA + S-adenosyl-L-homocysteine + H(+). With respect to regulation, cap-specific adenosine methyltransferase activity is inhibited by zinc. Functionally, cap-specific adenosine methyltransferase that catalyzes formation of N(6),2'-O-dimethyladenosine cap (m6A(m)) by methylating the adenosine at the second transcribed position of capped mRNAs. The chain is mRNA (2'-O-methyladenosine-N(6)-)-methyltransferase (pcif1) from Danio rerio (Zebrafish).